The chain runs to 254 residues: Cell division protein DivIB (254 aa).

Residues 1–21 (MPNAQIPVLKKNRTKKRTSRK) are Cytoplasmic-facing. The helical transmembrane segment at 22-42 (IAILLILLFIVLLAVLFFRSS) threads the bilayer. Residues 43–254 (LSRVSEIRFD…EEGQEKDTTQ (212 aa)) are Extracellular-facing. The POTRA domain maps to 44–112 (SRVSEIRFDG…GIIAIHIKEF (69 aa)).

Belongs to the FtsQ/DivIB family. DivIB subfamily.

Its subcellular location is the cell membrane. Functionally, cell division protein that may be involved in stabilizing or promoting the assembly of the division complex. This is Cell division protein DivIB from Paenibacillus polymyxa (strain E681).